The sequence spans 438 residues: Dihydroorotase (438 aa).

Positions 58 and 60 each coordinate Zn(2+). Substrate-binding positions include 60-62 and Asn-92; that span reads HLR. 3 residues coordinate Zn(2+): Asp-152, His-179, and His-232. Asn-278 is a substrate binding site. Asp-305 contacts Zn(2+). The active site involves Asp-305. Substrate-binding positions include His-309 and 323–324; that span reads FG.

This sequence belongs to the metallo-dependent hydrolases superfamily. DHOase family. Class I DHOase subfamily. It depends on Zn(2+) as a cofactor.

It carries out the reaction (S)-dihydroorotate + H2O = N-carbamoyl-L-aspartate + H(+). Its pathway is pyrimidine metabolism; UMP biosynthesis via de novo pathway; (S)-dihydroorotate from bicarbonate: step 3/3. In terms of biological role, catalyzes the reversible cyclization of carbamoyl aspartate to dihydroorotate. The sequence is that of Dihydroorotase from Leifsonia xyli subsp. xyli (strain CTCB07).